We begin with the raw amino-acid sequence, 77 residues long: Acyl carrier protein (77 aa).

In terms of domain architecture, Carrier spans 2–77 (SSIDKRIKEI…DAIDYITDHT (76 aa)). At serine 37 the chain carries O-(pantetheine 4'-phosphoryl)serine.

This sequence belongs to the acyl carrier protein (ACP) family. In terms of processing, 4'-phosphopantetheine is transferred from CoA to a specific serine of apo-ACP by AcpS. This modification is essential for activity because fatty acids are bound in thioester linkage to the sulfhydryl of the prosthetic group.

It localises to the cytoplasm. The protein operates within lipid metabolism; fatty acid biosynthesis. Carrier of the growing fatty acid chain in fatty acid biosynthesis. The protein is Acyl carrier protein of Geotalea daltonii (strain DSM 22248 / JCM 15807 / FRC-32) (Geobacter daltonii).